Consider the following 209-residue polypeptide: D-aminoacyl-tRNA deacylase 1 (209 aa).

Residues 139 to 140 (GP) carry the Gly-cisPro motif, important for rejection of L-amino acids motif. Residues 142–209 (TIELESPAPG…EGDVSSEREP (68 aa)) are disordered. Composition is skewed to basic and acidic residues over residues 159-170 (QLSKLEKQQQRK) and 181-194 (SSKE…EDRS). Phosphoserine is present on residues serine 197, serine 204, and serine 205.

Belongs to the DTD family. As to quaternary structure, homodimer. Interacts with CDC45 and TOPBP1. Post-translationally, preferentially phosphorylated in cells arrested early in S phase. Phosphorylation in the C-terminus weakens the interaction with CDC45.

It localises to the nucleus. The protein localises to the cytoplasm. It catalyses the reaction glycyl-tRNA(Ala) + H2O = tRNA(Ala) + glycine + H(+). The enzyme catalyses a D-aminoacyl-tRNA + H2O = a tRNA + a D-alpha-amino acid + H(+). Its function is as follows. An aminoacyl-tRNA editing enzyme that deacylates mischarged D-aminoacyl-tRNAs. Also deacylates mischarged glycyl-tRNA(Ala), protecting cells against glycine mischarging by AlaRS. Acts via tRNA-based rather than protein-based catalysis; rejects L-amino acids rather than detecting D-amino acids in the active site. By recycling D-aminoacyl-tRNA to D-amino acids and free tRNA molecules, this enzyme counteracts the toxicity associated with the formation of D-aminoacyl-tRNA entities in vivo and helps enforce protein L-homochirality. In terms of biological role, ATPase involved in DNA replication, may facilitate loading of CDC45 onto pre-replication complexes. In Mus musculus (Mouse), this protein is D-aminoacyl-tRNA deacylase 1 (Dtd1).